Consider the following 492-residue polypeptide: Bifunctional protein GlmU (492 aa).

The tract at residues 1–238 is pyrophosphorylase; sequence MRDAAVVILA…AALVAGVNDR (238 aa). UDP-N-acetyl-alpha-D-glucosamine contacts are provided by residues 9 to 12, K23, Q80, and 85 to 86; these read LAAG and GT. D111 contributes to the Mg(2+) binding site. Residues G148, E163, N178, and N236 each contribute to the UDP-N-acetyl-alpha-D-glucosamine site. N236 is a binding site for Mg(2+). Residues 239–259 form a linker region; sequence VQLADLAAVLNRRIVEGHQRA. Residues 260–492 form an N-acetyltransferase region; it reads GVTIIDPAST…EDQGPEATGE (233 aa). Positions 341 and 359 each coordinate UDP-N-acetyl-alpha-D-glucosamine. H371 (proton acceptor) is an active-site residue. Residues Y374 and N385 each contribute to the UDP-N-acetyl-alpha-D-glucosamine site. Acetyl-CoA-binding positions include A388, 394-395, S413, and A431; that span reads NY. The segment covering 469–483 has biased composition (low complexity); sequence EAAAAAGAGAGAAAE. Residues 469 to 492 form a disordered region; sequence EAAAAAGAGAGAAAEDQGPEATGE.

It in the N-terminal section; belongs to the N-acetylglucosamine-1-phosphate uridyltransferase family. This sequence in the C-terminal section; belongs to the transferase hexapeptide repeat family. Homotrimer. It depends on Mg(2+) as a cofactor.

The protein resides in the cytoplasm. It catalyses the reaction alpha-D-glucosamine 1-phosphate + acetyl-CoA = N-acetyl-alpha-D-glucosamine 1-phosphate + CoA + H(+). The enzyme catalyses N-acetyl-alpha-D-glucosamine 1-phosphate + UTP + H(+) = UDP-N-acetyl-alpha-D-glucosamine + diphosphate. It functions in the pathway nucleotide-sugar biosynthesis; UDP-N-acetyl-alpha-D-glucosamine biosynthesis; N-acetyl-alpha-D-glucosamine 1-phosphate from alpha-D-glucosamine 6-phosphate (route II): step 2/2. It participates in nucleotide-sugar biosynthesis; UDP-N-acetyl-alpha-D-glucosamine biosynthesis; UDP-N-acetyl-alpha-D-glucosamine from N-acetyl-alpha-D-glucosamine 1-phosphate: step 1/1. The protein operates within bacterial outer membrane biogenesis; LPS lipid A biosynthesis. Its function is as follows. Catalyzes the last two sequential reactions in the de novo biosynthetic pathway for UDP-N-acetylglucosamine (UDP-GlcNAc). The C-terminal domain catalyzes the transfer of acetyl group from acetyl coenzyme A to glucosamine-1-phosphate (GlcN-1-P) to produce N-acetylglucosamine-1-phosphate (GlcNAc-1-P), which is converted into UDP-GlcNAc by the transfer of uridine 5-monophosphate (from uridine 5-triphosphate), a reaction catalyzed by the N-terminal domain. In Mycolicibacterium vanbaalenii (strain DSM 7251 / JCM 13017 / BCRC 16820 / KCTC 9966 / NRRL B-24157 / PYR-1) (Mycobacterium vanbaalenii), this protein is Bifunctional protein GlmU.